The chain runs to 225 residues: MSEDHFDDEHEGHGGGGGSRHPMAARFRGYLPVVVDVETGGFNSATDALLEIAAVTIGMDEKGFVFPEHTYFFRVEPFEGANIEAAALEFTGIKLDHPLRMAVSEETAMNDIFRGVRKALKANGCKRAVLVGHNASFDLGFVNAAVARMDMKRNPFHPFSSFDTATLAGLAYGQTVLAKACQAAGIDFDGREAHSARYDTEKTAELFCGIVNRWKEMGGWQDFDD.

Positions methionine 1–histidine 21 are disordered. Residues valine 33 to phenylalanine 207 form the Exonuclease domain. Mg(2+) contacts are provided by aspartate 36, glutamate 38, histidine 194, and aspartate 199. Histidine 194 functions as the Proton donor/acceptor in the catalytic mechanism.

The protein belongs to the RNase T family. As to quaternary structure, homodimer. It depends on Mg(2+) as a cofactor.

Functionally, trims short 3' overhangs of a variety of RNA species, leaving a one or two nucleotide 3' overhang. Responsible for the end-turnover of tRNA: specifically removes the terminal AMP residue from uncharged tRNA (tRNA-C-C-A). Also appears to be involved in tRNA biosynthesis. The sequence is that of Ribonuclease T from Pseudomonas syringae pv. syringae (strain B728a).